The sequence spans 693 residues: Elongation factor G (693 aa).

One can recognise a tr-type G domain in the interval 8-283 (NRCRNIGIMA…AVVDYLPSPL (276 aa)). GTP contacts are provided by residues 17 to 24 (AHIDAGKT), 81 to 85 (DTPGH), and 135 to 138 (NKMD).

The protein belongs to the TRAFAC class translation factor GTPase superfamily. Classic translation factor GTPase family. EF-G/EF-2 subfamily.

Its subcellular location is the cytoplasm. Its function is as follows. Catalyzes the GTP-dependent ribosomal translocation step during translation elongation. During this step, the ribosome changes from the pre-translocational (PRE) to the post-translocational (POST) state as the newly formed A-site-bound peptidyl-tRNA and P-site-bound deacylated tRNA move to the P and E sites, respectively. Catalyzes the coordinated movement of the two tRNA molecules, the mRNA and conformational changes in the ribosome. The polypeptide is Elongation factor G (Acidobacterium capsulatum (strain ATCC 51196 / DSM 11244 / BCRC 80197 / JCM 7670 / NBRC 15755 / NCIMB 13165 / 161)).